The chain runs to 206 residues: Two-component response regulator ARR7 (206 aa).

In terms of domain architecture, Response regulatory spans 25-152; the sequence is HVLAVDDSIV…DVKRIKQLIM (128 aa). At D85 the chain carries 4-aspartylphosphate. A disordered region spans residues 165–206; the sequence is SNKRKLQEDSDTSSSSHDDTSIKDSSCSKRMKSESENLFSLL.

The protein belongs to the ARR family. Type-A subfamily. Post-translationally, two-component system major event consists of a His-to-Asp phosphorelay between a sensor histidine kinase (HK) and a response regulator (RR). In plants, the His-to-Asp phosphorelay involves an additional intermediate named Histidine-containing phosphotransfer protein (HPt). This multistep phosphorelay consists of a His-Asp-His-Asp sequential transfer of a phosphate group between first a His and an Asp of the HK protein, followed by the transfer to a conserved His of the HPt protein and finally the transfer to an Asp in the receiver domain of the RR protein. Predominantly expressed in roots and young flowers.

The protein localises to the nucleus. In terms of biological role, functions as a response regulator involved in His-to-Asp phosphorelay signal transduction system. Phosphorylation of the Asp residue in the receiver domain activates the ability of the protein to promote the transcription of target genes. Type-A response regulators seem to act as negative regulators of the cytokinin signaling. The protein is Two-component response regulator ARR7 (ARR7) of Arabidopsis thaliana (Mouse-ear cress).